Consider the following 445-residue polypeptide: Glycine--tRNA ligase (445 aa).

Residues arginine 97 and glutamate 145 each coordinate substrate. ATP contacts are provided by residues 177 to 179 (RNE), 187 to 192 (FRTCEF), 262 to 263 (EI), and 308 to 311 (GLTR). 192–196 (FEQME) serves as a coordination point for substrate. 304–308 (ETSAG) is a substrate binding site.

The protein belongs to the class-II aminoacyl-tRNA synthetase family. Homodimer.

It localises to the cytoplasm. It carries out the reaction tRNA(Gly) + glycine + ATP = glycyl-tRNA(Gly) + AMP + diphosphate. Its function is as follows. Catalyzes the attachment of glycine to tRNA(Gly). The chain is Glycine--tRNA ligase from Borreliella afzelii (strain PKo) (Borrelia afzelii).